A 3165-amino-acid polypeptide reads, in one-letter code: Protein eyes shut homolog (3165 aa).

Positions 1–21 are cleaved as a signal peptide; that stretch reads MTDKSIVILSLMVFHSSFING. The N-linked (GlcNAc...) asparagine glycan is linked to N166. EGF-like domains lie at 170 to 212, 213 to 254, and 256 to 292; these read KQQF…KYCQ, ELDA…KNCS, and IIGQ…PFCE. 9 disulfides stabilise this stretch: C174–C189, C183–C200, C202–C211, C217–C228, C222–C242, C244–C253, C260–C270, C265–C280, and C282–C291. N-linked (GlcNAc...) asparagine glycans are attached at residues N269 and N272. 2 N-linked (GlcNAc...) asparagine glycosylation sites follow: N311 and N343. EGF-like domains follow at residues 332–368 and 370–406; these read DVSE…LLCK and IQTS…KNCE. 4 disulfides stabilise this stretch: C341–C356, C358–C367, C374–C385, and C396–C405. N-linked (GlcNAc...) asparagine glycans are attached at residues N506 and N566. EGF-like domains are found at residues 567-602 and 643-679; these read TTDD…RLCV and DTED…TQCE. Cystine bridges form between C575–C590, C592–C601, C669–C678, C685–C696, C690–C705, C707–C719, C737–C748, C742–C757, C759–C768, C775–C786, C780–C795, C797–C806, C813–C824, C818–C835, C837–C846, C853–C866, C860–C876, C878–C887, C894–C905, C899–C914, C916–C925, C932–C943, C937–C952, C954–C963, C970–C981, C975–C990, C992–C1001, C1008–C1019, C1013–C1028, C1030–C1039, C1046–C1056, C1051–C1065, C1067–C1076, C1083–C1094, C1088–C1103, C1105–C1114, C1121–C1137, C1131–C1147, C1149–C1158, C1165–C1176, C1170–C1185, C1187–C1196, C2037–C2063, C2103–C2114, C2108–C2128, and C2130–C2139. Positions 681–720 constitute an EGF-like 8; calcium-binding domain; it reads DIDECASHPCKNGATCIDQPGNYFCQCVPPFKVVDGFSCL. The 37-residue stretch at 733–769 folds into the EGF-like 9; calcium-binding domain; that stretch reads DIDDCILNACEHNSTCKDLHLSYQCVCLSDWEGNFCE. One can recognise an EGF-like 10; calcium-binding domain in the interval 771-807; sequence ESNECKMNPCKNNSTCTDLYKSYRCECTSGWTGQNCS. EGF-like domains lie at 809–847, 849–888, and 890–926; these read EINE…QFCH, RYNL…KNCE, and DVKD…SLCE. The EGF-like 14; calcium-binding domain maps to 928-964; that stretch reads EINECSSEPCKNNGTCVDLTNRFFCNCEPEYHGPFCE. Residues 966–1002 form the EGF-like 15 domain; it reads DVNKCKISPCLDEENCVYRTDGYNCLCAPGYTGINCE. An EGF-like 16; calcium-binding domain is found at 1004-1040; it reads NLDECLSEPCLHDGVCIDGINHYTCDCKSGFFGTHCE. EGF-like domains are found at residues 1042 to 1077, 1079 to 1115, and 1117 to 1159; these read NAND…TQCK, KIND…AYCE, and SIDN…QFCE. One can recognise an EGF-like 20; calcium-binding domain in the interval 1161-1197; the sequence is NINECSSSPCLHGADCEDHINGYVCKCQPGWSGHHCE. The Laminin G-like 1 domain occupies 1883–2063; sequence FSCVRYYGDS…AVKNYHINNC (181 aa). Residues 2099–2140 enclose the EGF-like 21 domain; that stretch reads APSVCQQDVCHNGGTCHAIFLSSGIVSFQCDCPLHFTGRFCE. One can recognise a Laminin G-like 2 domain in the interval 2145–2339; it reads LFFPSFNGNS…NIENCHVPWC (195 aa). N2170 carries N-linked (GlcNAc...) asparagine glycosylation. 2 consecutive EGF-like domains span residues 2335–2368 and 2371–2408; these read HVPW…YSGK and QFAS…PLCT. 19 cysteine pairs are disulfide-bonded: C2339-C2350, C2344-C2359, C2375-C2386, C2380-C2396, C2398-C2407, C2576-C2609, C2614-C2625, C2619-C2634, C2636-C2645, C2652-C2668, C2662-C2677, C2679-C2688, C2868-C2895, C2900-C2911, C2905-C2920, C2922-C2931, C2937-C2948, C2942-C2958, and C2960-C2969. The 191-residue stretch at 2419 to 2609 folds into the Laminin G-like 3 domain; sequence SGTDAFGYTS…PNAGRSVGQC (191 aa). 2 consecutive EGF-like domains span residues 2610-2646 and 2648-2689; these read HASP…SFCT and TVST…IYCE. Residues 2717–2895 enclose the Laminin G-like 4 domain; it reads DPSFRSNELS…AKGGSNVGDC (179 aa). EGF-like domains follow at residues 2896–2932 and 2933–2970; these read DGTA…NTCN and QSVS…RYCE. The 191-residue stretch at 2975 to 3165 folds into the Laminin G-like 5 domain; that stretch reads FSTAKFMGNS…YDGDEQNEVT (191 aa).

Belongs to the EYS family. As to expression, expressed in retina (at protein level). Isoform 1: Detected in retina. Isoform 2: Detected in retina. Isoform 3: Strongly expressed in retina and testis. Isoform 4: Strongly expressed in testis, and weakly expressed in retina.

It localises to the cell projection. The protein localises to the cilium. It is found in the photoreceptor outer segment. Its subcellular location is the cytoplasm. The protein resides in the cytoskeleton. It localises to the cilium axoneme. The protein localises to the microtubule organizing center. It is found in the centrosome. Its subcellular location is the secreted. The protein resides in the extracellular space. It localises to the extracellular matrix. The protein localises to the interphotoreceptor matrix. Functionally, required to maintain the integrity of photoreceptor cells. Specifically required for normal morphology of the photoreceptor ciliary pocket, and might thus facilitate protein trafficking between the photoreceptor inner and outer segments via the transition zone. This Homo sapiens (Human) protein is Protein eyes shut homolog (EYS).